Consider the following 588-residue polypeptide: Arginine--tRNA ligase (588 aa).

The 'HIGH' region motif lies at 126 to 136; it reads PNIAKEMHVGH.

It belongs to the class-I aminoacyl-tRNA synthetase family. Monomer.

Its subcellular location is the cytoplasm. The enzyme catalyses tRNA(Arg) + L-arginine + ATP = L-arginyl-tRNA(Arg) + AMP + diphosphate. The protein is Arginine--tRNA ligase of Nostoc sp. (strain PCC 7120 / SAG 25.82 / UTEX 2576).